We begin with the raw amino-acid sequence, 379 residues long: Alternative oxidase 1, mitochondrial (379 aa).

The segment covering 33–50 has biased composition (low complexity); sequence TTTTSTKSRSSTSTAATT. A disordered region spans residues 33 to 76; sequence TTTTSTKSRSSTSTAATTVGNSNPKSPIDEDNLEKPGTIPTKHK. Fe cation contacts are provided by E180, E219, and H222. A helical membrane pass occupies residues 234 to 256; it reads WFTRSIIYIGQGVFTNIFFLVYL. Positions 270, 271, 326, and 329 each coordinate Fe cation.

This sequence belongs to the alternative oxidase family. Requires Fe cation as cofactor.

Its subcellular location is the mitochondrion inner membrane. Functionally, catalyzes cyanide-resistant oxygen consumption. May increase respiration when the cytochrome respiratory pathway is restricted, or in response to low temperatures. The polypeptide is Alternative oxidase 1, mitochondrial (AOX1) (Candida albicans (Yeast)).